The primary structure comprises 323 residues: Cytochrome c biogenesis protein CcsA (323 aa).

8 helical membrane-spanning segments follow: residues 9–29, 37–57, 71–91, 100–120, 145–165, 227–247, 261–275, and 288–308; these read ILTHISFSVISIVITIQLITL, LYVSSEKGMIATFFCITGLLV, LYESLLFLSWAFSIIHLFTYF, VSAITAPSTIFTQGFATSGFL, MVLGYAALLCGSLFSVALIVI, IISLGFIFLSIGILSGAVWAN, TWAFITWTIFAIYLH, and AIVASMGFLIIWICYFGVNLL.

The protein belongs to the CcmF/CycK/Ccl1/NrfE/CcsA family. As to quaternary structure, may interact with Ccs1.

It localises to the plastid. Its subcellular location is the chloroplast thylakoid membrane. Functionally, required during biogenesis of c-type cytochromes (cytochrome c6 and cytochrome f) at the step of heme attachment. This Cucumis sativus (Cucumber) protein is Cytochrome c biogenesis protein CcsA.